The sequence spans 79 residues: RNA-binding protein Hfq (79 aa).

One can recognise a Sm domain in the interval 9–69; that stretch reads DTFLNHLRKE…ISTFTPQRPV (61 aa).

This sequence belongs to the Hfq family. In terms of assembly, homohexamer.

Its function is as follows. RNA chaperone that binds small regulatory RNA (sRNAs) and mRNAs to facilitate mRNA translational regulation in response to envelope stress, environmental stress and changes in metabolite concentrations. Also binds with high specificity to tRNAs. The chain is RNA-binding protein Hfq from Brevibacillus brevis (strain 47 / JCM 6285 / NBRC 100599).